The primary structure comprises 428 residues: Serine--tRNA ligase (428 aa).

Residue 235–237 (TAE) coordinates L-serine. 266 to 268 (RSE) provides a ligand contact to ATP. Position 289 (E289) interacts with L-serine. Position 353–356 (353–356 (EISS)) interacts with ATP. S389 is an L-serine binding site.

Belongs to the class-II aminoacyl-tRNA synthetase family. Type-1 seryl-tRNA synthetase subfamily. Homodimer. The tRNA molecule binds across the dimer.

It is found in the cytoplasm. The catalysed reaction is tRNA(Ser) + L-serine + ATP = L-seryl-tRNA(Ser) + AMP + diphosphate + H(+). The enzyme catalyses tRNA(Sec) + L-serine + ATP = L-seryl-tRNA(Sec) + AMP + diphosphate + H(+). It functions in the pathway aminoacyl-tRNA biosynthesis; selenocysteinyl-tRNA(Sec) biosynthesis; L-seryl-tRNA(Sec) from L-serine and tRNA(Sec): step 1/1. Its function is as follows. Catalyzes the attachment of serine to tRNA(Ser). Is also able to aminoacylate tRNA(Sec) with serine, to form the misacylated tRNA L-seryl-tRNA(Sec), which will be further converted into selenocysteinyl-tRNA(Sec). The polypeptide is Serine--tRNA ligase (Shewanella pealeana (strain ATCC 700345 / ANG-SQ1)).